Here is a 552-residue protein sequence, read N- to C-terminus: HTH-type transcriptional regulator SgrR (552 aa).

The tract at residues 163-493 is solute-binding; that stretch reads ELKPDLAHHW…DDLDTDAQQW (331 aa).

In terms of biological role, activates the small RNA gene sgrS under glucose-phosphate stress conditions as well as yfdZ. Represses its own transcription under both stress and non-stress conditions. Might act as a sensor of the intracellular accumulation of phosphoglucose by binding these molecules in its C-terminal solute-binding domain. This chain is HTH-type transcriptional regulator SgrR, found in Pectobacterium atrosepticum (strain SCRI 1043 / ATCC BAA-672) (Erwinia carotovora subsp. atroseptica).